A 306-amino-acid polypeptide reads, in one-letter code: tRNA-cytidine(32) 2-sulfurtransferase (306 aa).

The PP-loop motif motif lies at 49–54; the sequence is SGGKDS. The [4Fe-4S] cluster site is built by cysteine 124, cysteine 127, and cysteine 215.

The protein belongs to the TtcA family. Homodimer. The cofactor is Mg(2+). [4Fe-4S] cluster is required as a cofactor.

The protein resides in the cytoplasm. The catalysed reaction is cytidine(32) in tRNA + S-sulfanyl-L-cysteinyl-[cysteine desulfurase] + AH2 + ATP = 2-thiocytidine(32) in tRNA + L-cysteinyl-[cysteine desulfurase] + A + AMP + diphosphate + H(+). It functions in the pathway tRNA modification. Catalyzes the ATP-dependent 2-thiolation of cytidine in position 32 of tRNA, to form 2-thiocytidine (s(2)C32). The sulfur atoms are provided by the cysteine/cysteine desulfurase (IscS) system. This Azoarcus sp. (strain BH72) protein is tRNA-cytidine(32) 2-sulfurtransferase.